We begin with the raw amino-acid sequence, 231 residues long: Equistatin (231 aa).

An N-terminal signal peptide occupies residues 1 to 32 (MALSQNQAKFSKGFVVMIWVLFIACAITSTEA). Thyroglobulin type-1 domains lie at 34 to 95 (LTKC…SPDC), 102 to 163 (LTLC…RPTC), and 167 to 231 (LSEC…RPTC). 9 disulfides stabilise this stretch: Cys-37–Cys-56, Cys-67–Cys-74, Cys-76–Cys-95, Cys-105–Cys-124, Cys-135–Cys-142, Cys-144–Cys-163, Cys-170–Cys-191, Cys-202–Cys-209, and Cys-211–Cys-231.

It belongs to the protease inhibitor I31 family.

It localises to the secreted. Its function is as follows. Potent inhibitor of papain-like cysteine proteinases (Ki=0.18-0.57 nM on papain), as well as of the aspartic proteinase cathepsin D (Ki=0.3-05 nM). The sequence is that of Equistatin from Actinia equina (Beadlet anemone).